The following is a 187-amino-acid chain: dITP/XTP pyrophosphatase (187 aa).

Residue 7-12 participates in substrate binding; sequence TGNKHK. Positions 36 and 64 each coordinate Mg(2+). Catalysis depends on Asp64, which acts as the Proton acceptor. Residues Ala65, 140-143, Lys163, and 168-169 contribute to the substrate site; these read FAFD and HR.

Belongs to the HAM1 NTPase family. In terms of assembly, homodimer. The cofactor is Mg(2+).

It catalyses the reaction XTP + H2O = XMP + diphosphate + H(+). The catalysed reaction is dITP + H2O = dIMP + diphosphate + H(+). The enzyme catalyses ITP + H2O = IMP + diphosphate + H(+). Pyrophosphatase that catalyzes the hydrolysis of nucleoside triphosphates to their monophosphate derivatives, with a high preference for the non-canonical purine nucleotides XTP (xanthosine triphosphate), dITP (deoxyinosine triphosphate) and ITP. Seems to function as a house-cleaning enzyme that removes non-canonical purine nucleotides from the nucleotide pool, thus preventing their incorporation into DNA/RNA and avoiding chromosomal lesions. This Methanothermobacter marburgensis (strain ATCC BAA-927 / DSM 2133 / JCM 14651 / NBRC 100331 / OCM 82 / Marburg) (Methanobacterium thermoautotrophicum) protein is dITP/XTP pyrophosphatase.